The sequence spans 507 residues: MGVIQGPVRVRFAPSPTGYLHIGGVRTALFNWLFARHYGGQFILRIEDTDEKRYVPGSADDLMASLRWVGIEWDEGPDIGGPHAPYVQSLRYEAGIYRPFVEQLLESGHAYLSFTTEEELERMRAEAQARGVKAFRFRGPERDWPLDRQREMAATGRPYTVRLKTPTEGVTAFRDLVRGGERIEFKNEELYDIVLVKSSGMPVYHLAHLVDDHLMRMTHVLRSDEWVASTPYHVLLYQAFGWDPPAFAHLPPILRQDGRGKLSKRTDDVAANRFWERGYLPDAMFNYLALQGWSYDGYTEIMSREELIERFTLDRVQPSPARWNPEKLLDMNGIYIRRLTTEQLVDAMAPFLARAGLIGNPPTPDERAYLLQLAPLIHERLKELGEAPELLEFFFRDVTDYDPQALIPKKMDASTTVAALQAARDRLASLEPWTHDRLEAELRALGEELGLKPGQLFGALRVAATGRTVAPPLFDTLAALGKPRTLRRLEAAISVLAAAHAEVKGQS.

A 'HIGH' region motif is present at residues 14–24; sequence PSPTGYLHIGG. The short motif at 261 to 265 is the 'KMSKS' region element; that stretch reads KLSKR. Residue K264 coordinates ATP.

Belongs to the class-I aminoacyl-tRNA synthetase family. Glutamate--tRNA ligase type 1 subfamily. In terms of assembly, monomer.

It is found in the cytoplasm. It carries out the reaction tRNA(Glu) + L-glutamate + ATP = L-glutamyl-tRNA(Glu) + AMP + diphosphate. Functionally, catalyzes the attachment of glutamate to tRNA(Glu) in a two-step reaction: glutamate is first activated by ATP to form Glu-AMP and then transferred to the acceptor end of tRNA(Glu). This chain is Glutamate--tRNA ligase, found in Roseiflexus castenholzii (strain DSM 13941 / HLO8).